The chain runs to 241 residues: ATP synthase subunit a (241 aa).

7 consecutive transmembrane segments (helical) span residues N29–V49, I86–P106, H114–F134, I144–F164, L177–N197, L200–V220, and A221–K241.

The protein belongs to the ATPase A chain family. In terms of assembly, F-type ATPases have 2 components, CF(1) - the catalytic core - and CF(0) - the membrane proton channel. CF(1) has five subunits: alpha(3), beta(3), gamma(1), delta(1), epsilon(1). CF(0) has three main subunits: a(1), b(2) and c(9-12). The alpha and beta chains form an alternating ring which encloses part of the gamma chain. CF(1) is attached to CF(0) by a central stalk formed by the gamma and epsilon chains, while a peripheral stalk is formed by the delta and b chains.

The protein resides in the cell membrane. Its function is as follows. Key component of the proton channel; it plays a direct role in the translocation of protons across the membrane. This Wolbachia sp. subsp. Brugia malayi (strain TRS) protein is ATP synthase subunit a.